Here is a 336-residue protein sequence, read N- to C-terminus: tRNA N6-adenosine threonylcarbamoyltransferase (336 aa).

The Fe cation site is built by H111 and H115. Substrate-binding positions include 134-138, D167, G180, D184, and N272; that span reads VVSGG. D300 contacts Fe cation.

It belongs to the KAE1 / TsaD family. Requires Fe(2+) as cofactor.

It localises to the cytoplasm. The catalysed reaction is L-threonylcarbamoyladenylate + adenosine(37) in tRNA = N(6)-L-threonylcarbamoyladenosine(37) in tRNA + AMP + H(+). Its function is as follows. Required for the formation of a threonylcarbamoyl group on adenosine at position 37 (t(6)A37) in tRNAs that read codons beginning with adenine. Is involved in the transfer of the threonylcarbamoyl moiety of threonylcarbamoyl-AMP (TC-AMP) to the N6 group of A37, together with TsaE and TsaB. TsaD likely plays a direct catalytic role in this reaction. This is tRNA N6-adenosine threonylcarbamoyltransferase from Caldicellulosiruptor bescii (strain ATCC BAA-1888 / DSM 6725 / KCTC 15123 / Z-1320) (Anaerocellum thermophilum).